A 434-amino-acid polypeptide reads, in one-letter code: Rubisco accumulation factor 1.1, chloroplastic (434 aa).

A chloroplast-targeting transit peptide spans 1-51 (MLSLTATTLSSSIFTQSKTHGFFNTRPVYRKPFTTITSALIPASNRQAPPK). An N-terminal alpha-helix region spans residues 65-254 (IPPKFRSLDT…KAKKAVLREL (190 aa)). Residues 273–419 (VPVVRLRFGE…GMVVLVVRPP (147 aa)) form a C-terminal beta sheet region.

This sequence belongs to the RAF family. Homodimer.

The protein localises to the plastid. It localises to the chloroplast. Its function is as follows. Required for assembly or stability of RuBisCO. Acts at a postchaperonin step to fold and/or assemble the large subunit (rbcL) into RuBisCO. RAF1 binds first to a rbcL dimer (rbcL(2)), leading to a rbcL(8)-RAF1(4) complex formation. In the next step, RBCS displaces RAF1, thus resulting in holoenzyme formation. In Arabidopsis thaliana (Mouse-ear cress), this protein is Rubisco accumulation factor 1.1, chloroplastic.